Consider the following 471-residue polypeptide: Threonine--tRNA ligase catalytic subunit (471 aa).

Positions 8 to 333 are catalytic; it reads THIDYAYELD…YLEHRRGRMP (326 aa). 3 residues coordinate Zn(2+): Cys112, His166, and His310.

Belongs to the class-II aminoacyl-tRNA synthetase family. Homodimer. Probably interacts with its editing subunit. Zn(2+) is required as a cofactor.

Its subcellular location is the cytoplasm. The catalysed reaction is tRNA(Thr) + L-threonine + ATP = L-threonyl-tRNA(Thr) + AMP + diphosphate + H(+). Its function is as follows. Catalyzes the attachment of threonine to tRNA(Thr) in a two-step reaction: L-threonine is first activated by ATP to form Thr-AMP and then transferred to the acceptor end of tRNA(Thr). This protein is probably not able to deacylate mischarged L-seryl-tRNA(Thr) as it lacks the appropriate domain. This chain is Threonine--tRNA ligase catalytic subunit, found in Aeropyrum pernix (strain ATCC 700893 / DSM 11879 / JCM 9820 / NBRC 100138 / K1).